A 190-amino-acid chain; its full sequence is MVISPSTLLVSITLSIICLIVSILYTSKSFVAQRNFLTSGNIAFSGASLNITSDGSAVYSWTNGPFSINILKFLAFLSLINLFLFVGLEFQETNVTFSIWLSNTAANVSLSILFDHYFIVFLTVALVVTWSIMNFSLLYGEDPNKNVFLLLTIFLLNMLILTCSNSLFLLFLGWEGVGFLSFLLIKMMNH.

Helical transmembrane passes span 1–21 (MVIS…CLIV), 68–88 (INIL…FVGL), 94–114 (NVTF…SILF), 118–138 (FIVF…FSLL), 146–166 (NVFL…CSNS), and 167–187 (LFLL…LIKM).

Belongs to the complex I subunit 5 family.

The protein resides in the mitochondrion inner membrane. It catalyses the reaction a ubiquinone + NADH + 5 H(+)(in) = a ubiquinol + NAD(+) + 4 H(+)(out). Core subunit of the mitochondrial membrane respiratory chain NADH dehydrogenase (Complex I) that is believed to belong to the minimal assembly required for catalysis. Complex I functions in the transfer of electrons from NADH to the respiratory chain. The immediate electron acceptor for the enzyme is believed to be ubiquinone. The polypeptide is NADH-ubiquinone oxidoreductase chain 5 (ND5) (Arbacia lixula (Black urchin)).